The following is a 204-amino-acid chain: DNA-directed RNA polymerase subunit gamma (204 aa).

The Zn(2+) site is built by C34, C36, C49, and C52.

The protein belongs to the RNA polymerase beta' chain family. RpoC1 subfamily. In cyanobacteria the RNAP catalytic core is composed of 2 alpha, 1 beta, 1 beta', 1 gamma and 1 omega subunit. When a sigma factor is associated with the core the holoenzyme is formed, which can initiate transcription. Zn(2+) is required as a cofactor.

The catalysed reaction is RNA(n) + a ribonucleoside 5'-triphosphate = RNA(n+1) + diphosphate. DNA-dependent RNA polymerase catalyzes the transcription of DNA into RNA using the four ribonucleoside triphosphates as substrates. This is DNA-directed RNA polymerase subunit gamma (rpoC1) from Prochlorococcus marinus (strain DV1).